We begin with the raw amino-acid sequence, 366 residues long: MSLYIGLMSGTSMDGIDAALLELPSNQLIHGITKQYSDDVRRNLDNLIMGNHLTLASICQLNTLIGREFAEAVRQLLIEIKVHPKEIQAIGSHGQTVCHDTSGSIPYTLQLGCGHTISSLTGITVVADFRTRDLVNGGQGAPFAPLYHQQIFSKVNESVAVVNIGGIANVTFIAKNQMTRGWDIGPGNCLMDAWIYKNKGALFDKSGVWASQGEVIHPLLEYLLQDPFFHLDSPKSIGKEYFSLSWLQKHLKPDYTPADIQATLLALTAHTIAETILNESGEIKQLYLCGGGAHNTHLKENLARLLPGIAVKSIVELGISPDYLEAMMFAWLAAQTINQIPVNLTSITGAKSIAILGAVYPIIKSY.

An ATP-binding site is contributed by 10–17 (GTSMDGID).

Belongs to the anhydro-N-acetylmuramic acid kinase family.

It catalyses the reaction 1,6-anhydro-N-acetyl-beta-muramate + ATP + H2O = N-acetyl-D-muramate 6-phosphate + ADP + H(+). The protein operates within amino-sugar metabolism; 1,6-anhydro-N-acetylmuramate degradation. It functions in the pathway cell wall biogenesis; peptidoglycan recycling. Catalyzes the specific phosphorylation of 1,6-anhydro-N-acetylmuramic acid (anhMurNAc) with the simultaneous cleavage of the 1,6-anhydro ring, generating MurNAc-6-P. Is required for the utilization of anhMurNAc either imported from the medium or derived from its own cell wall murein, and thus plays a role in cell wall recycling. The protein is Anhydro-N-acetylmuramic acid kinase of Legionella pneumophila (strain Lens).